Here is a 163-residue protein sequence, read N- to C-terminus: MHLLADPETWVAIAFVILMGLFAYLGVHRTVLKALDHRAERIRNELEEAKRLKQEAAKVLADYKARRASAEREAEEIVTSAKAEAERIAADAKAKMEDFVARRTKAAESKIALAEAQALADVRSAAADAAVQAAATVLSQSVKGSLGEDLVAKGIAEVGRKLN.

A helical transmembrane segment spans residues 7–27; that stretch reads PETWVAIAFVILMGLFAYLGV.

It belongs to the ATPase B chain family. In terms of assembly, F-type ATPases have 2 components, F(1) - the catalytic core - and F(0) - the membrane proton channel. F(1) has five subunits: alpha(3), beta(3), gamma(1), delta(1), epsilon(1). F(0) has three main subunits: a(1), b(2) and c(10-14). The alpha and beta chains form an alternating ring which encloses part of the gamma chain. F(1) is attached to F(0) by a central stalk formed by the gamma and epsilon chains, while a peripheral stalk is formed by the delta and b chains.

The protein localises to the cell inner membrane. Its function is as follows. F(1)F(0) ATP synthase produces ATP from ADP in the presence of a proton or sodium gradient. F-type ATPases consist of two structural domains, F(1) containing the extramembraneous catalytic core and F(0) containing the membrane proton channel, linked together by a central stalk and a peripheral stalk. During catalysis, ATP synthesis in the catalytic domain of F(1) is coupled via a rotary mechanism of the central stalk subunits to proton translocation. Functionally, component of the F(0) channel, it forms part of the peripheral stalk, linking F(1) to F(0). The protein is ATP synthase subunit b 1 of Bradyrhizobium sp. (strain BTAi1 / ATCC BAA-1182).